We begin with the raw amino-acid sequence, 228 residues long: MPASLTWHDVIGQEKEQPYFKETLAYVAAERNAGKTIYPAQHDVFNAFRLTELDQVKVVILGQDPYHGPNQAHGLSFSVLPGVPAPPSLVNIYKELATDIPGFQRPNHGFLQSWAEQGVLLLNTVLTVEAGNAHSHANLGWETFTDKVIAALNEHRDGVIFMLWGAHAQKKGRIIDTQRHFILKAPHPSPLSAHRGFLGCKHFSQANQLLQQHGQQPIDWQPKLPTAE.

The Proton acceptor role is filled by aspartate 64.

It belongs to the uracil-DNA glycosylase (UDG) superfamily. UNG family.

The protein resides in the cytoplasm. It carries out the reaction Hydrolyzes single-stranded DNA or mismatched double-stranded DNA and polynucleotides, releasing free uracil.. In terms of biological role, excises uracil residues from the DNA which can arise as a result of misincorporation of dUMP residues by DNA polymerase or due to deamination of cytosine. The polypeptide is Uracil-DNA glycosylase (Yersinia enterocolitica serotype O:8 / biotype 1B (strain NCTC 13174 / 8081)).